The primary structure comprises 108 residues: Ig kappa chain V-VI region NQ2-6.1 (108 aa).

Residues 1–23 (QILLTQSPAIMSASPGQKVTMTC) are framework-1. A disulfide bond links Cys23 and Cys87. The interval 24-33 (SASSSVSYMY) is complementarity-determining-1. The interval 34–48 (WYQQKPGSSPRLLIY) is framework-2. A complementarity-determining-2 region spans residues 49–55 (DTSNLAS). The interval 56–87 (GVPVRFSGSGSATSYSLTITRMQAEDAATYYC) is framework-3. The interval 88-98 (QQWSSYPPMLT) is complementarity-determining-3. Positions 99-108 (FGAGTKLELK) are framework-4.

This chain is Ig kappa chain V-VI region NQ2-6.1, found in Mus musculus (Mouse).